The sequence spans 322 residues: Tlg2p-like protein a (322 aa).

The Cytoplasmic segment spans residues 1–301 (MATRNRTLLF…QRHGGMVKCA (301 aa)). Residues 116 to 146 (KEDQHNIESLTQEITFLLKKSEKQLQRLSAS) adopt a coiled-coil conformation. Residues 226 to 288 (EEVSVEREKE…EDGLKQLQKA (63 aa)) enclose the t-SNARE coiled-coil homology domain. Residues 302–322 (SVLVILCFIMLLLLILKEIFL) form a helical; Anchor for type IV membrane protein membrane-spanning segment.

It belongs to the syntaxin family. Interacts with VTI12 and SYP61 to form a t-SNARE complex and with VPS45. Interacts with TNO1. Binds to YKT61 and YKT62. Core constituent of the SNARE complex required for membrane fusion at the trans-Golgi network. As to expression, mostly expressed in flowers, to a lower extent in leaves and roots, and, at low levels, in stems.

The protein resides in the golgi apparatus. It localises to the trans-Golgi network membrane. In terms of biological role, contributes to the regulation of secretory and vacuolar transport pathways in the post-Golgi network, and to the maintenance of the Golgi apparatus and trans-Golgi network (TGN) morphologies. Together with VTI12, required for membrane fusion. Vesicle trafficking protein that functions in the secretory pathway and mediates liposome fusion; the fusion of phospholipid vesicles containing SYP41 and VTI12 is triggered by YKT61 and YKT62. Required for extracellular resistance responses to a fungal pathogen. Also involved in the protection of chloroplasts from salicylic acid-dependent biotic stress. The sequence is that of Tlg2p-like protein a from Arabidopsis thaliana (Mouse-ear cress).